The chain runs to 221 residues: Thiamine-phosphate synthase (221 aa).

Residues 41–45 (QLRDK) and asparagine 82 each bind 4-amino-2-methyl-5-(diphosphooxymethyl)pyrimidine. Residues aspartate 83 and aspartate 102 each contribute to the Mg(2+) site. Serine 120 is a binding site for 4-amino-2-methyl-5-(diphosphooxymethyl)pyrimidine. 146–148 (TPT) is a binding site for 2-[(2R,5Z)-2-carboxy-4-methylthiazol-5(2H)-ylidene]ethyl phosphate. Lysine 149 contacts 4-amino-2-methyl-5-(diphosphooxymethyl)pyrimidine. Glycine 177 is a 2-[(2R,5Z)-2-carboxy-4-methylthiazol-5(2H)-ylidene]ethyl phosphate binding site.

Belongs to the thiamine-phosphate synthase family. It depends on Mg(2+) as a cofactor.

The catalysed reaction is 2-[(2R,5Z)-2-carboxy-4-methylthiazol-5(2H)-ylidene]ethyl phosphate + 4-amino-2-methyl-5-(diphosphooxymethyl)pyrimidine + 2 H(+) = thiamine phosphate + CO2 + diphosphate. It carries out the reaction 2-(2-carboxy-4-methylthiazol-5-yl)ethyl phosphate + 4-amino-2-methyl-5-(diphosphooxymethyl)pyrimidine + 2 H(+) = thiamine phosphate + CO2 + diphosphate. The enzyme catalyses 4-methyl-5-(2-phosphooxyethyl)-thiazole + 4-amino-2-methyl-5-(diphosphooxymethyl)pyrimidine + H(+) = thiamine phosphate + diphosphate. The protein operates within cofactor biosynthesis; thiamine diphosphate biosynthesis; thiamine phosphate from 4-amino-2-methyl-5-diphosphomethylpyrimidine and 4-methyl-5-(2-phosphoethyl)-thiazole: step 1/1. Its function is as follows. Condenses 4-methyl-5-(beta-hydroxyethyl)thiazole monophosphate (THZ-P) and 2-methyl-4-amino-5-hydroxymethyl pyrimidine pyrophosphate (HMP-PP) to form thiamine monophosphate (TMP). This chain is Thiamine-phosphate synthase, found in Mycolicibacterium vanbaalenii (strain DSM 7251 / JCM 13017 / BCRC 16820 / KCTC 9966 / NRRL B-24157 / PYR-1) (Mycobacterium vanbaalenii).